The chain runs to 285 residues: Dihydropteroate synthase (285 aa).

One can recognise a Pterin-binding domain in the interval 25–271; that stretch reads TLVMGILNVT…DVKQIARMAK (247 aa). Asn32 is a Mg(2+) binding site. Residues Thr72, Asp106, Asn125, Asp189, Lys225, and 259-261 contribute to the (7,8-dihydropterin-6-yl)methyl diphosphate site; that span reads RVH.

Belongs to the DHPS family. Requires Mg(2+) as cofactor.

It catalyses the reaction (7,8-dihydropterin-6-yl)methyl diphosphate + 4-aminobenzoate = 7,8-dihydropteroate + diphosphate. Its pathway is cofactor biosynthesis; tetrahydrofolate biosynthesis; 7,8-dihydrofolate from 2-amino-4-hydroxy-6-hydroxymethyl-7,8-dihydropteridine diphosphate and 4-aminobenzoate: step 1/2. Functionally, catalyzes the condensation of para-aminobenzoate (pABA) with 6-hydroxymethyl-7,8-dihydropterin diphosphate (DHPt-PP) to form 7,8-dihydropteroate (H2Pte), the immediate precursor of folate derivatives. The sequence is that of Dihydropteroate synthase (sul) from Bacillus subtilis (strain 168).